A 104-amino-acid chain; its full sequence is Urease subunit beta (104 aa).

It belongs to the urease beta subunit family. In terms of assembly, heterotrimer of UreA (gamma), UreB (beta) and UreC (alpha) subunits. Three heterotrimers associate to form the active enzyme.

Its subcellular location is the cytoplasm. The catalysed reaction is urea + 2 H2O + H(+) = hydrogencarbonate + 2 NH4(+). The protein operates within nitrogen metabolism; urea degradation; CO(2) and NH(3) from urea (urease route): step 1/1. This Rhodopseudomonas palustris (strain BisB5) protein is Urease subunit beta.